We begin with the raw amino-acid sequence, 644 residues long: Chaperone protein DnaK (644 aa).

Disordered regions lie at residues 490–533 and 570–644; these read QEEA…ELDD and EELQ…EDDA. Positions 492 to 513 are enriched in basic and acidic residues; that stretch reads EAEKHKEEDEARRERIEARNEA. The span at 523 to 533 shows a compositional bias: acidic residues; that stretch reads LLEENEEELDD. Over residues 588 to 622 the composition is skewed to gly residues; that stretch reads GPGGAGGAAGAGPGGMGGMGGAAGPGGAGGAGPGG. Residues 624–644 are compositionally biased toward acidic residues; sequence DADDEEYVDADFEDVDDEDDA.

Belongs to the heat shock protein 70 family.

Its function is as follows. Acts as a chaperone. The polypeptide is Chaperone protein DnaK (Halorubrum lacusprofundi (strain ATCC 49239 / DSM 5036 / JCM 8891 / ACAM 34)).